A 328-amino-acid polypeptide reads, in one-letter code: D-cysteine desulfhydrase (328 aa).

N6-(pyridoxal phosphate)lysine is present on Lys-51.

The protein belongs to the ACC deaminase/D-cysteine desulfhydrase family. Homodimer. Pyridoxal 5'-phosphate serves as cofactor.

It catalyses the reaction D-cysteine + H2O = hydrogen sulfide + pyruvate + NH4(+) + H(+). Catalyzes the alpha,beta-elimination reaction of D-cysteine and of several D-cysteine derivatives. It could be a defense mechanism against D-cysteine. This chain is D-cysteine desulfhydrase, found in Escherichia coli O9:H4 (strain HS).